We begin with the raw amino-acid sequence, 230 residues long: Thioredoxin domain-containing protein PLP3A (230 aa).

Residues 89–173 (VSEGDFLGEV…GVAMDRLVGF (85 aa)) form the Thioredoxin domain. The segment at 197–230 (LSKKKKEEDDEDAEYQESIRRSVRSSENLDSDSD) is disordered.

Belongs to the phosducin family. As to quaternary structure, interacts with TUBB2, TUBB3, TUBB4 and TUBB5. In terms of tissue distribution, expressed in embryos, shoot meristems, leaf primordia, root meristems, floral meristems and young floral buds.

It localises to the cytoplasm. Its subcellular location is the nucleus. Its function is as follows. Tubulin-binding protein involved in microtubule formation. The sequence is that of Thioredoxin domain-containing protein PLP3A (PLP3A) from Arabidopsis thaliana (Mouse-ear cress).